A 203-amino-acid chain; its full sequence is Octanoyltransferase (203 aa).

One can recognise a BPL/LPL catalytic domain in the interval Glu-30–Val-203. Substrate contacts are provided by residues Arg-69–His-76, Ser-135–Gly-137, and Gly-148–Ser-150. The Acyl-thioester intermediate role is filled by Cys-166.

This sequence belongs to the LipB family.

The protein localises to the cytoplasm. The enzyme catalyses octanoyl-[ACP] + L-lysyl-[protein] = N(6)-octanoyl-L-lysyl-[protein] + holo-[ACP] + H(+). It participates in protein modification; protein lipoylation via endogenous pathway; protein N(6)-(lipoyl)lysine from octanoyl-[acyl-carrier-protein]: step 1/2. In terms of biological role, catalyzes the transfer of endogenously produced octanoic acid from octanoyl-acyl-carrier-protein onto the lipoyl domains of lipoate-dependent enzymes. Lipoyl-ACP can also act as a substrate although octanoyl-ACP is likely to be the physiological substrate. The chain is Octanoyltransferase from Persephonella marina (strain DSM 14350 / EX-H1).